A 267-amino-acid chain; its full sequence is Glucosamine-6-phosphate deaminase (267 aa).

Asp-71 serves as the catalytic Proton acceptor; for enolization step. Asp-140 functions as the For ring-opening step in the catalytic mechanism. Residue His-142 is the Proton acceptor; for ring-opening step of the active site. Glu-147 functions as the For ring-opening step in the catalytic mechanism.

It belongs to the glucosamine/galactosamine-6-phosphate isomerase family. As to quaternary structure, homohexamer.

The protein resides in the cytoplasm. It carries out the reaction alpha-D-glucosamine 6-phosphate + H2O = beta-D-fructose 6-phosphate + NH4(+). The protein operates within nucleotide-sugar biosynthesis; UDP-N-acetyl-alpha-D-glucosamine biosynthesis; alpha-D-glucosamine 6-phosphate from D-fructose 6-phosphate: step 1/1. In terms of biological role, catalyzes the reversible conversion of alpha-D-glucosamine 6-phosphate (GlcN-6P) into beta-D-fructose 6-phosphate (Fru-6P) and ammonium ion, a regulatory reaction step in de novo uridine diphosphate-N-acetyl-alpha-D-glucosamine (UDP-GlcNAc) biosynthesis via hexosamine pathway. This Caenorhabditis elegans protein is Glucosamine-6-phosphate deaminase.